Here is a 354-residue protein sequence, read N- to C-terminus: Rhodopsin (354 aa).

Over 1 to 36 the chain is Extracellular; it reads MNGTEGENFYVPMSNKTGVVRNPFEYPQYYLADHWM. N-linked (GlcNAc...) asparagine glycosylation is found at Asn2 and Asn15. Residues 37 to 61 form a helical membrane-spanning segment; sequence FAVLAAYMFFLIITGFPVNFLTLFV. At 62 to 73 the chain is on the cytoplasmic side; that stretch reads TIQNKKLRQPLN. Residues 74-96 form a helical membrane-spanning segment; sequence YILLNLAVANLFMVFGGFTTTLI. At 97–110 the chain is on the extracellular side; that stretch reads TSMNGYFVFGSTGC. Residues Cys110 and Cys187 are joined by a disulfide bond. The chain crosses the membrane as a helical span at residues 111–133; sequence NLEGFFATLGGEISLWSLVVLAI. The 'Ionic lock' involved in activated form stabilization motif lies at 134-136; the sequence is ERY. Topologically, residues 134–152 are cytoplasmic; the sequence is ERYVVVCKPMSNFRFGSQH. The helical transmembrane segment at 153 to 173 threads the bilayer; that stretch reads AIAGVSLTWVMAMACAAPPLV. At 174-202 the chain is on the extracellular side; the sequence is GWSRYIPEGLQCSCGIDYYTPKPEINNVS. An N-linked (GlcNAc...) asparagine glycan is attached at Asn200. Residues 203-224 form a helical membrane-spanning segment; that stretch reads FVIYMFVVHFSIPLTIIFFCYG. The Cytoplasmic portion of the chain corresponds to 225-252; the sequence is RLVCTVKAAAAQQQESETTQRAEREVTR. The chain crosses the membrane as a helical span at residues 253-274; sequence MVVIMVIGFLICWLPYASVALY. Residues 275 to 286 are Extracellular-facing; sequence IFNNQGSEFGPV. The chain crosses the membrane as a helical span at residues 287–308; it reads FMTIPSFFAKSSALYNPLIYIL. At Lys296 the chain carries N6-(retinylidene)lysine. The Cytoplasmic portion of the chain corresponds to 309 to 354; sequence MNKQFRNCMITTLCCGKNPFEEEESTSASASKTEASSVSSSQVSPA. S-palmitoyl cysteine attachment occurs at residues Cys322 and Cys323. The disordered stretch occupies residues 333–354; sequence STSASASKTEASSVSSSQVSPA. The segment covering 334–354 has biased composition (low complexity); the sequence is TSASASKTEASSVSSSQVSPA.

The protein belongs to the G-protein coupled receptor 1 family. Opsin subfamily. In terms of processing, phosphorylated on some or all of the serine and threonine residues present in the C-terminal region. Post-translationally, contains one covalently linked retinal chromophore.

The protein localises to the membrane. It is found in the cell projection. It localises to the cilium. Its subcellular location is the photoreceptor outer segment. Its function is as follows. Photoreceptor required for image-forming vision at low light intensity. While most salt water fish species use retinal as chromophore, most freshwater fish use 3-dehydroretinal, or a mixture of retinal and 3-dehydroretinal. Light-induced isomerization of 11-cis to all-trans retinal triggers a conformational change that activates signaling via G-proteins. Subsequent receptor phosphorylation mediates displacement of the bound G-protein alpha subunit by arrestin and terminates signaling. The sequence is that of Rhodopsin (rho) from Galeus melastomus (Blackmouth catshark).